A 433-amino-acid chain; its full sequence is 3-phosphoshikimate 1-carboxyvinyltransferase (433 aa).

Residues K23, S24, and R28 each coordinate 3-phosphoshikimate. K23 is a binding site for phosphoenolpyruvate. G95 and R123 together coordinate phosphoenolpyruvate. Residues S170, S171, Q172, S198, D317, and K344 each coordinate 3-phosphoshikimate. Q172 serves as a coordination point for phosphoenolpyruvate. D317 serves as the catalytic Proton acceptor. 3 residues coordinate phosphoenolpyruvate: R348, R391, and K416.

It belongs to the EPSP synthase family. As to quaternary structure, monomer.

Its subcellular location is the cytoplasm. The catalysed reaction is 3-phosphoshikimate + phosphoenolpyruvate = 5-O-(1-carboxyvinyl)-3-phosphoshikimate + phosphate. The protein operates within metabolic intermediate biosynthesis; chorismate biosynthesis; chorismate from D-erythrose 4-phosphate and phosphoenolpyruvate: step 6/7. Its function is as follows. Catalyzes the transfer of the enolpyruvyl moiety of phosphoenolpyruvate (PEP) to the 5-hydroxyl of shikimate-3-phosphate (S3P) to produce enolpyruvyl shikimate-3-phosphate and inorganic phosphate. The protein is 3-phosphoshikimate 1-carboxyvinyltransferase of Neisseria meningitidis serogroup C / serotype 2a (strain ATCC 700532 / DSM 15464 / FAM18).